Here is a 283-residue protein sequence, read N- to C-terminus: Pantothenate synthetase (283 aa).

Residue 30–37 coordinates ATP; sequence MGNLHAGH. Catalysis depends on His37, which acts as the Proton donor. A (R)-pantoate-binding site is contributed by Gln61. Gln61 provides a ligand contact to beta-alanine. 149 to 152 is a binding site for ATP; the sequence is GQKD. Gln155 serves as a coordination point for (R)-pantoate. ATP contacts are provided by residues Val178 and 186 to 189; that span reads LSSR.

The protein belongs to the pantothenate synthetase family. As to quaternary structure, homodimer.

It is found in the cytoplasm. It carries out the reaction (R)-pantoate + beta-alanine + ATP = (R)-pantothenate + AMP + diphosphate + H(+). It participates in cofactor biosynthesis; (R)-pantothenate biosynthesis; (R)-pantothenate from (R)-pantoate and beta-alanine: step 1/1. In terms of biological role, catalyzes the condensation of pantoate with beta-alanine in an ATP-dependent reaction via a pantoyl-adenylate intermediate. This is Pantothenate synthetase from Hydrogenovibrio crunogenus (strain DSM 25203 / XCL-2) (Thiomicrospira crunogena).